The primary structure comprises 85 residues: Antibacterial factor-related peptide 1 (85 aa).

The first 19 residues, 1–19, serve as a signal peptide directing secretion; the sequence is MLYFCLLLVLLLPNNGVSS.

Expressed in the pharynx and body wall muscle.

It localises to the secreted. The polypeptide is Antibacterial factor-related peptide 1 (Caenorhabditis elegans).